Here is a 593-residue protein sequence, read N- to C-terminus: Serine/threonine-protein kinase SSN3 (593 aa).

The 400-residue stretch at Tyr90 to Phe489 folds into the Protein kinase domain. Residue Ile96–Val104 participates in ATP binding. The tract at residues Lys161 to Ser199 is disordered. The segment covering Pro169–Glu185 has biased composition (polar residues). A compositionally biased stretch (low complexity) spans Thr186 to Ser199. ATP is bound at residue Lys211. The Proton acceptor role is filled by Asp312. Disordered regions lie at residues Asp517–Gly551 and Ala569–Lys593. A compositionally biased stretch (polar residues) spans Asn518 to Gln536. The segment covering Gly540–Gly551 has biased composition (low complexity). Residues Gly573–Gly585 are compositionally biased toward polar residues.

This sequence belongs to the protein kinase superfamily. CMGC Ser/Thr protein kinase family. CDC2/CDKX subfamily. Component of the SRB8-11 complex, a regulatory module of the Mediator complex. Mg(2+) serves as cofactor.

It is found in the nucleus. The catalysed reaction is L-seryl-[protein] + ATP = O-phospho-L-seryl-[protein] + ADP + H(+). The enzyme catalyses L-threonyl-[protein] + ATP = O-phospho-L-threonyl-[protein] + ADP + H(+). It carries out the reaction [DNA-directed RNA polymerase] + ATP = phospho-[DNA-directed RNA polymerase] + ADP + H(+). In terms of biological role, component of the SRB8-11 complex. The SRB8-11 complex is a regulatory module of the Mediator complex which is itself involved in regulation of basal and activated RNA polymerase II-dependent transcription. The SRB8-11 complex may be involved in the transcriptional repression of a subset of genes regulated by Mediator. It may inhibit the association of the Mediator complex with RNA polymerase II to form the holoenzyme complex. The SRB8-11 complex phosphorylates the C-terminal domain (CTD) of the largest subunit of RNA polymerase II. The sequence is that of Serine/threonine-protein kinase SSN3 (SSN3) from Kluyveromyces lactis (strain ATCC 8585 / CBS 2359 / DSM 70799 / NBRC 1267 / NRRL Y-1140 / WM37) (Yeast).